The following is a 1562-amino-acid chain: Pikromycin polyketide synthase component PikAIII (1562 aa).

One can recognise a Ketosynthase family 3 (KS3) domain in the interval 34–464 (HEPVAIVGMA…GTNAHVVLEE (431 aa)). Residues 37–1475 (VAIVGMACRL…TPAALAAHLH (1439 aa)) form a module 5 region. Catalysis depends on Cys209, which acts as the Acyl-thioester intermediate; for beta-ketoacyl synthase activity. Residues His344 and His384 each act as for beta-ketoacyl synthase activity in the active site. An acyltransferase region spans residues 565-866 (FVFPGQGTQW…GGQERLVTSL (302 aa)). Ser655 serves as the catalytic Acyl-ester intermediate; for acyltransferase activity. Residues 1116 to 1293 (GTVLITGGTG…ATSVAWGLWA (178 aa)) form a beta-ketoacyl reductase region. Residues 1124–1127 (TGAL), 1147–1150 (SRSG), 1176–1177 (DV), Lys1226, and 1248–1249 (YS) contribute to the NADP(+) site. Catalysis depends on Tyr1263, which acts as the Acyl-ester intermediate; for beta-ketoacyl reductase activity. Residues 1403–1478 (PALLTLVRTH…ALAAHLHEAY (76 aa)) form the Carrier domain. Ser1438 is modified (O-(pantetheine 4'-phosphoryl)serine). Residues 1519–1548 (GIEPEPGSGGSDGGAADPGAEPEASIDDLD) are disordered. The segment covering 1532–1541 (GAADPGAEPE) has biased composition (low complexity).

As to quaternary structure, homodimer. Pikromycin PKS consists of a combination of multimodular (PikAI and PikAII) and monomodular (PikAIII and PikAIV) polypeptides each coding for a functional synthase subunit which participates in 1 (monomodular) or 2 (multimodular) of the six FAS-like elongation steps required for formation of the polyketide. Module 1, 2, 3, 4, 5, and 6 participating in biosynthesis steps 1, 2, 3, 4, 5, and 6, respectively. The cofactor is pantetheine 4'-phosphate.

It carries out the reaction 5 (S)-methylmalonyl-CoA + malonyl-CoA + 5 NADPH + 11 H(+) = 10-deoxymethynolide + 6 CO2 + 5 NADP(+) + 6 CoA + 2 H2O. The catalysed reaction is 6 (S)-methylmalonyl-CoA + malonyl-CoA + 5 NADPH + 12 H(+) = narbonolide + 7 CO2 + 5 NADP(+) + 7 CoA + 2 H2O. The protein operates within antibiotic biosynthesis. Functionally, involved in the biosynthesis of 12- and 14-membered ring macrolactone antibiotics such as methymycin and neomethymycin, and pikromycin and narbomycin, respectively. Component of the pikromycin PKS which catalyzes the biosynthesis of both precursors 10-deoxymethynolide (12-membered ring macrolactone) and narbonolide (14-membered ring macrolactone). Chain elongation through PikAI, PikAII and PikAIII followed by thioesterase catalyzed termination results in the production of 10-deoxymethynolide, while continued elongation through PikAIV, followed by thioesterase (TE) catalyzed cyclization results in the biosynthesis of the narbonolide. This chain is Pikromycin polyketide synthase component PikAIII, found in Streptomyces venezuelae.